Here is a 286-residue protein sequence, read N- to C-terminus: Large ribosomal subunit protein uL4m (286 aa).

The N-terminal 26 residues, 1–26 (MTIKRNLVKTLQSIRYQATTATAHAE), are a transit peptide targeting the mitochondrion. The interval 85-132 (RRVGASNPPGRSENGFSRRKLMPQKGSGRARVGDANSPTRHNGGRALA) is disordered.

This sequence belongs to the universal ribosomal protein uL4 family. In terms of assembly, component of the mitochondrial large ribosomal subunit (mt-LSU). Mature yeast 74S mitochondrial ribosomes consist of a small (37S) and a large (54S) subunit. The 37S small subunit contains a 15S ribosomal RNA (15S mt-rRNA) and 34 different proteins. The 54S large subunit contains a 21S rRNA (21S mt-rRNA) and 46 different proteins.

Its subcellular location is the mitochondrion. In terms of biological role, component of the mitochondrial ribosome (mitoribosome), a dedicated translation machinery responsible for the synthesis of mitochondrial genome-encoded proteins, including at least some of the essential transmembrane subunits of the mitochondrial respiratory chain. The mitoribosomes are attached to the mitochondrial inner membrane and translation products are cotranslationally integrated into the membrane. The protein is Large ribosomal subunit protein uL4m (YML6) of Saccharomyces cerevisiae (strain ATCC 204508 / S288c) (Baker's yeast).